Here is a 569-residue protein sequence, read N- to C-terminus: Acetate/butyrate--CoA ligase AAE7, peroxisomal (569 aa).

Positions 567-569 (SRL) match the Microbody targeting signal motif.

This sequence belongs to the ATP-dependent AMP-binding enzyme family. Expressed in roots, leaves, stems, flowers and developing seeds.

The protein localises to the peroxisome. It catalyses the reaction acetate + ATP + CoA = acetyl-CoA + AMP + diphosphate. It carries out the reaction a medium-chain fatty acid + ATP + CoA = a medium-chain fatty acyl-CoA + AMP + diphosphate. Peroxisomal acetate/butyrate--CoA ligase that is probably involved in the activation of exogenous acetate for entry into the glyoxylate cycle. May play a role to prevent carbon loss from peroxisomes during lipid mobilization. In vitro, is active with both acetate and butyrate. This Arabidopsis thaliana (Mouse-ear cress) protein is Acetate/butyrate--CoA ligase AAE7, peroxisomal (AAE7).